The chain runs to 184 residues: Protein GrpE (184 aa).

Positions 1-10 are enriched in basic and acidic residues; that stretch reads MSQETEKDLE. Residues 1–38 are disordered; that stretch reads MSQETEKDLEQTQNEELVEEAQSDEKKDQEVDPVEAAQ.

Belongs to the GrpE family. As to quaternary structure, homodimer.

Its subcellular location is the cytoplasm. In terms of biological role, participates actively in the response to hyperosmotic and heat shock by preventing the aggregation of stress-denatured proteins, in association with DnaK and GrpE. It is the nucleotide exchange factor for DnaK and may function as a thermosensor. Unfolded proteins bind initially to DnaJ; upon interaction with the DnaJ-bound protein, DnaK hydrolyzes its bound ATP, resulting in the formation of a stable complex. GrpE releases ADP from DnaK; ATP binding to DnaK triggers the release of the substrate protein, thus completing the reaction cycle. Several rounds of ATP-dependent interactions between DnaJ, DnaK and GrpE are required for fully efficient folding. The protein is Protein GrpE of Sulfurovum sp. (strain NBC37-1).